Reading from the N-terminus, the 406-residue chain is Cytochrome P450 165C4 (406 aa).

Cysteine 356 contributes to the heme binding site.

It belongs to the cytochrome P450 family. It depends on heme as a cofactor.

It participates in antibiotic biosynthesis; vancomycin biosynthesis. Its function is as follows. Involved in the coupling of aromatic side chains of the heptapeptide of vancomycin. This is Cytochrome P450 165C4 (cyp165C4) from Amycolatopsis orientalis (Nocardia orientalis).